Here is a 489-residue protein sequence, read N- to C-terminus: tRNA(Ile)-lysidine synthase (489 aa).

Position 35-40 (35-40 (SGGLDS)) interacts with ATP.

Belongs to the tRNA(Ile)-lysidine synthase family.

Its subcellular location is the cytoplasm. The catalysed reaction is cytidine(34) in tRNA(Ile2) + L-lysine + ATP = lysidine(34) in tRNA(Ile2) + AMP + diphosphate + H(+). In terms of biological role, ligates lysine onto the cytidine present at position 34 of the AUA codon-specific tRNA(Ile) that contains the anticodon CAU, in an ATP-dependent manner. Cytidine is converted to lysidine, thus changing the amino acid specificity of the tRNA from methionine to isoleucine. This is tRNA(Ile)-lysidine synthase from Burkholderia pseudomallei (strain K96243).